Consider the following 239-residue polypeptide: Purine nucleoside phosphorylase DeoD-type (239 aa).

His-5 serves as a coordination point for a purine D-ribonucleoside. Phosphate is bound by residues Gly-21, Arg-25, Arg-44, and 88-91 (RVGS). Residues 180–182 (EME) and 204–205 (SD) contribute to the a purine D-ribonucleoside site. Catalysis depends on Asp-205, which acts as the Proton donor.

This sequence belongs to the PNP/UDP phosphorylase family. Homohexamer; trimer of homodimers.

The catalysed reaction is a purine D-ribonucleoside + phosphate = a purine nucleobase + alpha-D-ribose 1-phosphate. The enzyme catalyses a purine 2'-deoxy-D-ribonucleoside + phosphate = a purine nucleobase + 2-deoxy-alpha-D-ribose 1-phosphate. Functionally, catalyzes the reversible phosphorolytic breakdown of the N-glycosidic bond in the beta-(deoxy)ribonucleoside molecules, with the formation of the corresponding free purine bases and pentose-1-phosphate. The polypeptide is Purine nucleoside phosphorylase DeoD-type (Myxococcus xanthus (strain DK1622)).